We begin with the raw amino-acid sequence, 496 residues long: Xylulose kinase (496 aa).

83–84 (MH) is a substrate binding site. D237 acts as the Proton acceptor in catalysis.

It belongs to the FGGY kinase family.

The enzyme catalyses D-xylulose + ATP = D-xylulose 5-phosphate + ADP + H(+). Its function is as follows. Catalyzes the phosphorylation of D-xylulose to D-xylulose 5-phosphate. The chain is Xylulose kinase from Staphylococcus epidermidis (strain ATCC 12228 / FDA PCI 1200).